The following is a 289-amino-acid chain: Diacylglycerol pyrophosphate phosphatase 1 (289 aa).

The Vacuolar segment spans residues 1–21 (MNRVSFIKTPFNIGAKWRLED). A helical transmembrane segment spans residues 22–42 (VFLLIIMILLNYPVYYQQPFE). The Cytoplasmic segment spans residues 43 to 65 (RQFYINDLTISHPYATTERVNNN). A helical transmembrane segment spans residues 66-86 (MLFVYSFVVPSLTILIIGSIL). Over 87–92 (ADRRHL) the chain is Vacuolar. A helical membrane pass occupies residues 93–113 (IFILYTSLLGLSLAWFSTSFF). The Cytoplasmic portion of the chain corresponds to 114–172 (TNFIKNWIGRLRPDFLDRCQPVEGLPLDTLFTAKDVCTTKNHERLLDGFRTTPSGHSSE). Residues 118–126 (KNWIGRLRP) are phosphatase sequence motif I. Positions 166–169 (PSGH) are phosphatase sequence motif II. The next 2 helical transmembrane spans lie at 173 to 193 (SFAGLGYLYFWLCGQLLTESP) and 194 to 214 (LMPLWRKMVAFLPLLGAALIA). Residues 215 to 222 (LSRTQDYR) lie on the Cytoplasmic side of the membrane. The phosphatase sequence motif III stretch occupies residues 216–227 (SRTQDYRHHFVD). A helical transmembrane segment spans residues 223–243 (HHFVDVILGSMLGYIMAHFFY). Residues 244 to 289 (RRIFPPIDDPLPFKPLMDDSDVTLEEAVTHQRIPDEELHPLSDEGM) are Vacuolar-facing. S285 bears the Phosphoserine mark.

Belongs to the PA-phosphatase related phosphoesterase family.

It is found in the vacuole membrane. The enzyme catalyses a 1,2-diacyl-sn-glycerol 3-diphosphate + H2O = a 1,2-diacyl-sn-glycero-3-phosphate + phosphate + H(+). It carries out the reaction a 1,2-diacyl-sn-glycero-3-phosphate + H2O = a 1,2-diacyl-sn-glycerol + phosphate. It catalyses the reaction a 1-acyl-sn-glycero-3-phosphate + H2O = a 1-acyl-sn-glycerol + phosphate. Its activity is regulated as follows. Inhibited by sodium fluoride (NaF) and pyrophosphate. Strongly inhibited by manganese ion and, to a lower extent, by magnesium and calcium ions. Also inhibited by Cu(2+) ion. In an indirect manner, it is also inhibited by the zinc ion which is able to form a complex with DGPP and prevent the enzyme from removing the phosphate from the substrate. Not inhibited by N-ethylmaleimide. In terms of biological role, catalyzes the dephosphorylation of diacylglycerol diphosphate (DGPP) to phosphatidate (PA) and the subsequent dephosphorylation of PA to diacylglycerol (DAG). Together with LPP1, regulates intracellular DGPP and PA levels, which are phospholipid molecules believed to play a signaling role in stress response. Can also use lysophosphatidic acid (LPA) and phosphatidylglycerophosphate as substrates. Substrate preference is DGPP &gt; LPA &gt; PA. Activity is independent of a divalent cation ion and insensitive to inhibition by N-ethylmaleimide. In Saccharomyces cerevisiae (strain ATCC 204508 / S288c) (Baker's yeast), this protein is Diacylglycerol pyrophosphate phosphatase 1 (DPP1).